Consider the following 227-residue polypeptide: Cleavage and polyadenylation specificity factor subunit 5 (227 aa).

The residue at position 2 (Ser2) is an N-acetylserine. Positions 2 to 147 (SVVPPNRSQT…DWVIDDCIGN (146 aa)) are necessary for RNA-binding. Arg15 is subject to Omega-N-methylarginine. N6-acetyllysine occurs at positions 23 and 29. The residue at position 40 (Tyr40) is a Phosphotyrosine. Lys56 bears the N6-acetyllysine mark. Residues 76–201 (MRRTVEGVLI…KLVAAPLFEL (126 aa)) form the Nudix hydrolase domain. The necessary for interactions with PAPOLA and PABPN1 stretch occupies residues 81 to 160 (EGVLIVHEHR…PNFEPPQYPY (80 aa)). Residues 102–104 (TFF) are interaction with RNA. Residues 109–130 (GELNPGEDEVEGLKRLMTEILG) carry the Nudix box motif.

It belongs to the Nudix hydrolase family. CPSF5 subfamily. As to quaternary structure, homodimer (via N- and C-terminus); binds RNA as homodimer. Component of the cleavage factor Im (CFIm) complex which is a heterotetramer composed of two subunits of NUDT21/CPSF5 and two subunits of CPSF6 or CPSF7 or a heterodimer of CPSF6 and CPSF7. The cleavage factor Im (CFIm) complex associates with the CPSF and CSTF complexes to promote the assembly of the core mRNA 3'-processing machinery. Interacts with CPSF6 (via the RRM domain); this interaction is direct and enhances binding to RNA. Interacts with CPSF7. Interacts with FIP1L1; this interaction occurs in a RNA sequence-specific manner. Interacts with PABPN1. Interacts (via N-terminus) with PAPOLA (via C-terminus); this interaction is direct and diminished by acetylation. Interacts with SNRNP70. Interacts with VIRMA. In terms of processing, acetylated mainly by p300/CBP, recruited to the complex by CPSF6. Acetylation decreases interaction with PAPAO. Deacetylated by the class I/II HDACs, HDAC1, HDAC3 and HDAC10, and by the class III HDACs, SIRT1 and SIRT2. As to expression, expressed in testis. Expressed in male germ cells (at protein level).

The protein localises to the nucleus. It is found in the cytoplasm. Component of the cleavage factor Im (CFIm) complex that functions as an activator of the pre-mRNA 3'-end cleavage and polyadenylation processing required for the maturation of pre-mRNA into functional mRNAs. CFIm contributes to the recruitment of multiprotein complexes on specific sequences on the pre-mRNA 3'-end, so called cleavage and polyadenylation signals (pA signals). Most pre-mRNAs contain multiple pA signals, resulting in alternative cleavage and polyadenylation (APA) producing mRNAs with variable 3'-end formation. The CFIm complex acts as a key regulator of cleavage and polyadenylation site choice during APA through its binding to 5'-UGUA-3' elements localized in the 3'-untranslated region (UTR) for a huge number of pre-mRNAs. NUDT21/CPSF5 activates indirectly the mRNA 3'-processing machinery by recruiting CPSF6 and/or CPSF7. Binds to 5'-UGUA-3' elements localized upstream of pA signals that act as enhancers of pre-mRNA 3'-end processing. The homodimer mediates simultaneous sequence-specific recognition of two 5'-UGUA-3' elements within the pre-mRNA. Plays a role in somatic cell fate transitions and pluripotency by regulating widespread changes in gene expression through an APA-dependent function. Binds to chromatin. Binds to, but does not hydrolyze mono- and di-adenosine nucleotides. The chain is Cleavage and polyadenylation specificity factor subunit 5 from Mus musculus (Mouse).